A 454-amino-acid polypeptide reads, in one-letter code: Histidine--tRNA ligase (454 aa).

Residues 434-454 (ADAGAWNPPTEDLHPGVIGTW) are disordered.

The protein belongs to the class-II aminoacyl-tRNA synthetase family. Homodimer.

It localises to the cytoplasm. It carries out the reaction tRNA(His) + L-histidine + ATP = L-histidyl-tRNA(His) + AMP + diphosphate + H(+). The protein is Histidine--tRNA ligase (hisS) of Cutibacterium acnes (strain DSM 16379 / KPA171202) (Propionibacterium acnes).